The following is a 1241-amino-acid chain: Interphotoreceptor matrix proteoglycan 2 (1241 aa).

Positions 1-28 (MIMFLPLGRISLGILILFLTGGNLVSVS) are cleaved as a signal peptide. Topologically, residues 29–1104 (EEIQDRMHAV…CEEFVSEPFV (1076 aa)) are extracellular. Thr-193 carries O-linked (GalNAc...) threonine glycosylation. Positions 206–234 (AASERSAASPQESISNEIENVTEQPTPPA) are disordered. Residues 211 to 229 (SAASPQESISNEIENVTEQ) show a composition bias toward polar residues. An N-linked (GlcNAc...) asparagine glycan is attached at Asn-225. Residue Thr-231 is glycosylated (O-linked (GalNAc...) threonine). In terms of domain architecture, SEA 1 spans 235–349 (AEQIAEFSIQ…KPTAVYTISN (115 aa)). The segment at 255 to 263 (RDPSSALYR) is hyaluronan-binding motif involved in chondroitin sulfate A-binding. 3 N-linked (GlcNAc...) asparagine glycosylation sites follow: Asn-297, Asn-316, and Asn-366. O-linked (GalNAc...) threonine glycans are attached at residues Thr-429, Thr-430, and Thr-431. A compositionally biased stretch (low complexity) spans 431-443 (TISPFGFSSGPPS). 2 disordered regions span residues 431–456 (TISP…STLG) and 500–520 (VAPE…TEES). Thr-817 carries O-linked (GalNAc...) threonine glycosylation. N-linked (GlcNAc...) asparagine glycans are attached at residues Asn-841, Asn-945, and Asn-959. The region spanning 900-1013 (GALVVFFSLR…YSLDVESGDD (114 aa)) is the SEA 2 domain. EGF-like domains are found at residues 1013-1054 (DANP…LPCQ) and 1055-1096 (SVCD…QHCE). Cystine bridges form between Cys-1017–Cys-1028, Cys-1022–Cys-1039, Cys-1041–Cys-1053, Cys-1057–Cys-1070, Cys-1064–Cys-1080, and Cys-1082–Cys-1095. The interval 1083 to 1091 (RVGSNWWYR) is hyaluronan-binding motif involved in chondroitin sulfate C-binding. A helical transmembrane segment spans residues 1105–1125 (IGITIASVVSLLLVASAVVFF). At 1126–1241 (LAKMLQAQNV…FVREHEMEEL (116 aa)) the chain is on the cytoplasmic side. The tract at residues 1128–1136 (KMLQAQNVR) is hyaluronan-binding motif involved in chondroitin sulfate A- and C-binding. The hyaluronan-binding motif involved in chondroitin sulfate C-binding stretch occupies residues 1139–1145 (RQRPTNR). The segment at 1210 to 1218 (KEEIQERMR) is hyaluronan-binding motif involved in chondroitin sulfate A- and C-binding motif.

As to expression, expressed in the pineal gland and the outer layer of the retina.

Its subcellular location is the photoreceptor outer segment membrane. The protein resides in the photoreceptor inner segment membrane. It localises to the secreted. It is found in the extracellular space. The protein localises to the extracellular matrix. Its subcellular location is the interphotoreceptor matrix. Functionally, chondroitin sulfate- and hyaluronan-binding proteoglycan involved in the organization of interphotoreceptor matrix; may participate in the maturation and maintenance of the light-sensitive photoreceptor outer segment. Binds heparin. This Rattus norvegicus (Rat) protein is Interphotoreceptor matrix proteoglycan 2 (Impg2).